The primary structure comprises 250 residues: Isoprenyl transferase (250 aa).

Asp26 is an active-site residue. Asp26 contacts Mg(2+). Residues 27–30 (GNGR), Trp31, Arg39, His43, and 71–73 (STE) contribute to the substrate site. The Proton acceptor role is filled by Asn74. Residues Trp75, Arg77, Arg198, and 204 to 206 (RLS) contribute to the substrate site. Residue Glu217 participates in Mg(2+) binding.

This sequence belongs to the UPP synthase family. In terms of assembly, homodimer. Mg(2+) is required as a cofactor.

Its function is as follows. Catalyzes the condensation of isopentenyl diphosphate (IPP) with allylic pyrophosphates generating different type of terpenoids. The chain is Isoprenyl transferase from Streptococcus agalactiae serotype V (strain ATCC BAA-611 / 2603 V/R).